Consider the following 65-residue polypeptide: Large ribosomal subunit protein bL35 (65 aa).

The protein belongs to the bacterial ribosomal protein bL35 family.

The chain is Large ribosomal subunit protein bL35 from Stenotrophomonas maltophilia (strain R551-3).